The primary structure comprises 350 residues: 8-amino-7-oxononanoate synthase (350 aa).

A pyridoxal 5'-phosphate-binding site is contributed by 77–78 (GY). A substrate-binding site is contributed by His-102. Pyridoxal 5'-phosphate-binding positions include Ser-150, 175–178 (DDAH), and 204–207 (TLSK). Lys-207 carries the post-translational modification N6-(pyridoxal phosphate)lysine. Thr-316 lines the substrate pocket.

Belongs to the class-II pyridoxal-phosphate-dependent aminotransferase family. BioF subfamily. Homodimer. Requires pyridoxal 5'-phosphate as cofactor.

It catalyses the reaction 6-carboxyhexanoyl-[ACP] + L-alanine + H(+) = (8S)-8-amino-7-oxononanoate + holo-[ACP] + CO2. The protein operates within cofactor biosynthesis; biotin biosynthesis. In terms of biological role, catalyzes the decarboxylative condensation of pimeloyl-[acyl-carrier protein] and L-alanine to produce 8-amino-7-oxononanoate (AON), [acyl-carrier protein], and carbon dioxide. This Methylocella silvestris (strain DSM 15510 / CIP 108128 / LMG 27833 / NCIMB 13906 / BL2) protein is 8-amino-7-oxononanoate synthase.